The chain runs to 222 residues: MTHPLFRHAEFYTTVNRLQDLPQTAGVEVAFAGRSNAGKSSAINTLVGRERFAFVSKTPGRTQHINFFQLGEERFMVDLPGYGYAQVPLAIRQHWGHLLSSYLQTRQSLYGMILIMDIRHPLTKLDLQMLDWFRQTKKPVHVLLTKADKLSKSRALVALNEVRQFLTVNYPHCTVQTFSSLKVAGVEEASQLLQNWFDTGHASVQQENGEISEQKKTPAKGD.

The region spanning 25–199 (AGVEVAFAGR…SQLLQNWFDT (175 aa)) is the EngB-type G domain. GTP-binding positions include 33-40 (GRSNAGKS), 60-64 (GRTQH), 78-81 (DLPG), 145-148 (TKAD), and 178-180 (FSS). Mg(2+) is bound by residues S40 and T62.

It belongs to the TRAFAC class TrmE-Era-EngA-EngB-Septin-like GTPase superfamily. EngB GTPase family. The cofactor is Mg(2+).

Necessary for normal cell division and for the maintenance of normal septation. The chain is Probable GTP-binding protein EngB from Nitrosomonas europaea (strain ATCC 19718 / CIP 103999 / KCTC 2705 / NBRC 14298).